The following is an 831-amino-acid chain: Cadherin-related family member 3 (831 aa).

A signal peptide spans 1 to 19; that stretch reads MQGAVIVLVLFGITSGGEA. The Extracellular segment spans residues 20 to 711; the sequence is LHLLHLPATS…VYSTSAWYVP (692 aa). 6 Cadherin domains span residues 24-132, 136-236, 237-344, 346-466, 462-570, and 567-693; these read HLPA…PPQF, LAQG…TPRF, TSPR…NPAT, RKLT…RPSY, ERPS…TPNF, and TPNF…RPRI. N47, N186, and N257 each carry an N-linked (GlcNAc...) asparagine glycan. A helical transmembrane segment spans residues 712-732; the sequence is FIVTLGSILLLGLLGSLMVLL. At 733–831 the chain is on the cytoplasmic side; sequence SKAVYRHCSS…EAPVPKHTGR (99 aa). Disordered stretches follow at residues 743 to 763 and 798 to 831; these read TTRRDRKPLTKKRDTKRMNRE and RWKGPLTQLPNWPEPSTQHRGTAGEAPVPKHTGR. Positions 749-763 are enriched in basic and acidic residues; it reads KPLTKKRDTKRMNRE. Residues 805 to 817 show a composition bias toward polar residues; the sequence is QLPNWPEPSTQHR.

It localises to the cell membrane. Functionally, cadherins are calcium-dependent cell adhesion proteins. They preferentially interact with themselves in a homophilic manner in connecting cells; cadherins may thus contribute to the sorting of heterogeneous cell types. In Mus musculus (Mouse), this protein is Cadherin-related family member 3 (Cdhr3).